The following is a 287-amino-acid chain: AA9 family lytic polysaccharide monooxygenase D (287 aa).

The N-terminal stretch at 1 to 17 is a signal peptide; that stretch reads MKLSLLAAAAIAPMVSA. His-18 is a binding site for Cu(2+). Cys-67 and Cys-189 are oxidised to a cystine. Position 176 (His-176) interacts with O2. Residue Tyr-186 participates in Cu(2+) binding. Residues Asn-220 and Asn-250 are each glycosylated (N-linked (GlcNAc...) asparagine). The interval 239–287 is disordered; it reads TGGSGSSTGSYNESNAEDSNEYPYQKESGTCQSNFYRREHARDFSHRRA. Basic and acidic residues predominate over residues 274-287; it reads YRREHARDFSHRRA.

It belongs to the polysaccharide monooxygenase AA9 family. It depends on Cu(2+) as a cofactor.

It is found in the secreted. The catalysed reaction is [(1-&gt;4)-beta-D-glucosyl]n+m + reduced acceptor + O2 = 4-dehydro-beta-D-glucosyl-[(1-&gt;4)-beta-D-glucosyl]n-1 + [(1-&gt;4)-beta-D-glucosyl]m + acceptor + H2O.. In terms of biological role, lytic polysaccharide monooxygenase (LPMO) that depolymerizes crystalline and amorphous polysaccharides via the oxidation of scissile alpha- or beta-(1-4)-glycosidic bonds, yielding C1 oxidation products. Catalysis by LPMOs requires the reduction of the active-site copper from Cu(II) to Cu(I) by a reducing agent and H(2)O(2) or O(2) as a cosubstrate. Active on celluloseas as well as on the hemicellulose xyloglucan. Shows synergy with other hydrolases in degrading sorghum stover. The sequence is that of AA9 family lytic polysaccharide monooxygenase D from Emericella nidulans (strain FGSC A4 / ATCC 38163 / CBS 112.46 / NRRL 194 / M139) (Aspergillus nidulans).